The chain runs to 72 residues: Gas vesicle protein A (72 aa).

The protein belongs to the gas vesicle GvpA family. As to quaternary structure, the gas vesicle shell is 2 nm thick and consists of a single layer of this protein. It forms helical ribs nearly perpendicular to the long axis of the vesicle.

It localises to the gas vesicle shell. Gas vesicles are hollow, gas filled proteinaceous nanostructures found in some microorganisms. During planktonic growth they allow positioning of the organism at a favorable depth for light or nutrient acquisition. GvpA forms the protein shell. This chain is Gas vesicle protein A, found in Synechococcus sp. (strain JA-3-3Ab) (Cyanobacteria bacterium Yellowstone A-Prime).